A 408-amino-acid polypeptide reads, in one-letter code: Bone morphogenetic protein 4 (408 aa).

Positions Met1–Gly19 are cleaved as a signal peptide. Residues Gly20–Arg292 constitute a propeptide that is removed on maturation. At Ser91 the chain carries Phosphoserine. The disordered stretch occupies residues Ser91–Pro111. N-linked (GlcNAc...) asparagine glycosylation is found at Asn144 and Asn209. Residues Arg281–Asn307 are disordered. Basic residues predominate over residues Thr284–Asn307. 3 cysteine pairs are disulfide-bonded: Cys308–Cys373, Cys337–Cys405, and Cys341–Cys407. N-linked (GlcNAc...) asparagine glycans are attached at residues Asn350 and Asn365.

This sequence belongs to the TGF-beta family. In terms of assembly, homodimer; disulfide-linked. Interacts with SOSTDC1, GREM2, RGMA, RGMB and RGMC. Part of a complex consisting of TWSG1 and CHRD. Interacts with the serine proteases, HTRA1 and HTRA3; the interaction with either inhibits BMP4-mediated signaling. The HTRA protease activity is required for this inhibition. Interacts with FBN1 (via N-terminal domain) and FBN2. Interacts with type I receptor BMPR1A. Interacts with type II receptor BMPR2. Interacts with FSTL1; this interaction inhibits the activation of the BMP4/Smad1/5/8 signaling pathway. Interacts with SCUBE3. Interacts with TGFBR3. As to expression, in the cochlea, detected in nonprosensory regions and outer sulcus (at protein level). Prior to gastrulation, expressed in the extraembryonic ectoderm. Later, expressed in the extraembryonic mesoderm.

It localises to the secreted. The protein localises to the extracellular space. Its subcellular location is the extracellular matrix. Its function is as follows. Growth factor of the TGF-beta superfamily that plays essential roles in many developmental processes, including neurogenesis, vascular development, angiogenesis and osteogenesis. Acts in concert with PTHLH/PTHRP to stimulate ductal outgrowth during embryonic mammary development and to inhibit hair follicle induction. Initiates the canonical BMP signaling cascade by associating with type I receptor BMPR1A and type II receptor BMPR2. Once all three components are bound together in a complex at the cell surface, BMPR2 phosphorylates and activates BMPR1A. In turn, BMPR1A propagates signal by phosphorylating SMAD1/5/8 that travel to the nucleus and act as activators and repressors of transcription of target genes. Positively regulates the expression of odontogenic development regulator MSX1 via inducing the IPO7-mediated import of SMAD1 to the nucleus. Required for MSX1-mediated mesenchymal molar tooth bud development beyond the bud stage, via promoting Wnt signaling. Acts as a positive regulator of odontoblast differentiation during mesenchymal tooth germ formation, expression is repressed during the bell stage by MSX1-mediated inhibition of CTNNB1 signaling. Able to induce its own expression in dental mesenchymal cells and also in the neighboring dental epithelial cells via an MSX1-mediated pathway. Can also signal through non-canonical BMP pathways such as ERK/MAP kinase, PI3K/Akt or SRC cascades. For example, induces SRC phosphorylation which, in turn, activates VEGFR2, leading to an angiogenic response. This Mus musculus (Mouse) protein is Bone morphogenetic protein 4.